The chain runs to 296 residues: Phosphoribosylaminoimidazole-succinocarboxamide synthase (296 aa).

This sequence belongs to the SAICAR synthetase family.

The catalysed reaction is 5-amino-1-(5-phospho-D-ribosyl)imidazole-4-carboxylate + L-aspartate + ATP = (2S)-2-[5-amino-1-(5-phospho-beta-D-ribosyl)imidazole-4-carboxamido]succinate + ADP + phosphate + 2 H(+). It participates in purine metabolism; IMP biosynthesis via de novo pathway; 5-amino-1-(5-phospho-D-ribosyl)imidazole-4-carboxamide from 5-amino-1-(5-phospho-D-ribosyl)imidazole-4-carboxylate: step 1/2. The chain is Phosphoribosylaminoimidazole-succinocarboxamide synthase from Geobacter metallireducens (strain ATCC 53774 / DSM 7210 / GS-15).